The chain runs to 100 residues: Large ribosomal subunit protein uL23 (100 aa).

Belongs to the universal ribosomal protein uL23 family. As to quaternary structure, part of the 50S ribosomal subunit. Contacts protein L29, and trigger factor when it is bound to the ribosome.

Functionally, one of the early assembly proteins it binds 23S rRNA. One of the proteins that surrounds the polypeptide exit tunnel on the outside of the ribosome. Forms the main docking site for trigger factor binding to the ribosome. The sequence is that of Large ribosomal subunit protein uL23 from Buchnera aphidicola subsp. Schizaphis graminum (strain Sg).